A 336-amino-acid chain; its full sequence is MLQSLAGSSCVRLVERHRSARCFGFLVLGYLLYLVFGAVVFSSVELPYEDLLRQELRKLKRRFLEEHECLSEQQLEQFLGRVLEASNYGVSVLSNASGNWNWDFTSALFFASTVLSTTGYGHTVPLSDGGKAFCIIYSVIGIPFTLLFLTAVVQRITVHVTRRPVLYFHIRWGFSKQVVAIVHAVLLGFVTVSCFFFIPAAVFSVLEDDWNFLESFYFCFISLSTIGLGDYVPGEGYNQKFRELYKIGITCYLLLGLIAMLVVLETFCELHELKKFRKMFYVKKDKDEDQVHIIEHDQLSFSSITDQAAGMKEDQKQNEPFVATQSSACMDGPANH.

Residues 1-20 lie on the Cytoplasmic side of the membrane; it reads MLQSLAGSSCVRLVERHRSA. The chain crosses the membrane as a helical span at residues 21 to 41; the sequence is RCFGFLVLGYLLYLVFGAVVF. At 42 to 103 the chain is on the extracellular side; it reads SSVELPYEDL…SNASGNWNWD (62 aa). N-linked (GlcNAc...) asparagine glycosylation occurs at Asn-95. Residues 104–116 constitute an intramembrane region (helical); the sequence is FTSALFFASTVLS. Residues 117 to 122 lie within the membrane without spanning it; sequence TTGYGH. The tract at residues 117 to 122 is selectivity filter 1; sequence TTGYGH. At 123–132 the chain is on the extracellular side; the sequence is TVPLSDGGKA. A helical membrane pass occupies residues 133–156; that stretch reads FCIIYSVIGIPFTLLFLTAVVQRI. The Cytoplasmic portion of the chain corresponds to 157 to 181; it reads TVHVTRRPVLYFHIRWGFSKQVVAI. A helical transmembrane segment spans residues 182–202; sequence VHAVLLGFVTVSCFFFIPAAV. Over 203-211 the chain is Extracellular; it reads FSVLEDDWN. The helical intramembrane region spans 212 to 224; the sequence is FLESFYFCFISLS. Residues 225-230 form a selectivity filter 2 region; it reads TIGLGD. Residues 225–231 lie within the membrane without spanning it; that stretch reads TIGLGDY. Residues 232-243 are Extracellular-facing; the sequence is VPGEGYNQKFRE. Residues 244–267 form a helical membrane-spanning segment; that stretch reads LYKIGITCYLLLGLIAMLVVLETF. Topologically, residues 268 to 336 are cytoplasmic; that stretch reads CELHELKKFR…SACMDGPANH (69 aa). Lys-274 participates in a covalent cross-link: Glycyl lysine isopeptide (Lys-Gly) (interchain with G-Cter in SUMO). Positions 293–299 are important for intracellular retention in recycling endosomes; sequence IIEHDQL. A disordered region spans residues 315–336; it reads QKQNEPFVATQSSACMDGPANH. Ser-326 carries the post-translational modification Phosphoserine.

It belongs to the two pore domain potassium channel (TC 1.A.1.8) family. As to quaternary structure, homodimer; disulfide-linked. Heterodimer with KCNK2; disulfide-linked. In astrocytes, forms mostly heterodimeric potassium channels with KCNK2, with only a minor proportion of functional channels containing homodimeric KCNK1. Interacts with KCNK3 and KCNK9, forming functional heterodimeric channels. Interacts with GNG4. Identified in a complex with PSD and ARF6; interacts only with PSD that is bound to ARF6. Interacts with UBE2I. Post-translationally, sumoylation is controversial. Sumoylated by UBE2I. Not sumoylated when expressed in xenopus oocytes or mammalian cells. Sumoylation inactivates the channel, but does not interfere with expression at the cell membrane. Sumoylation of a single subunit is sufficient to silence the dimeric channel. Sumoylation of KCNK1 is sufficient to silence heterodimeric channels formed by KCNK1 and KCNK3 or KCNK9. Desumoylated by SENP1; this activates the channel. Desumoylated by SENP1; this strongly increases halothane-mediated activation of heterodimeric channels formed with KCNK9. SENP1 treatment has no effect.

The protein resides in the cell membrane. It localises to the recycling endosome. It is found in the synaptic cell membrane. The protein localises to the cytoplasmic vesicle. Its subcellular location is the perikaryon. The protein resides in the cell projection. It localises to the dendrite. It is found in the apical cell membrane. The catalysed reaction is K(+)(in) = K(+)(out). The enzyme catalyses NH4(+)(in) = NH4(+)(out). It catalyses the reaction Na(+)(in) = Na(+)(out). It carries out the reaction Rb(+)(in) = Rb(+)(out). The catalysed reaction is Cs(+)(in) = Cs(+)(out). The enzyme catalyses Li(+)(in) = Li(+)(out). It catalyses the reaction L-glutamate(out) = L-glutamate(in). It carries out the reaction chloride(in) = chloride(out). Ion channel that contributes to passive transmembrane potassium transport and to the regulation of the resting membrane potential in brain astrocytes, but also in kidney and in other tissues. Forms dimeric channels through which potassium ions pass in accordance with their electrochemical gradient. The channel is selective for K(+) ions at physiological potassium concentrations and at neutral pH, but becomes permeable to Na(+) at subphysiological K(+) levels, and upon acidification of the extracellular medium. The homodimer has very low potassium channel activity, when expressed in heterologous systems, and can function as weakly inward rectifying potassium channel. Channel activity is modulated by activation of serotonin receptors. Heterodimeric channels containing KCNK1 and KCNK2 have much higher activity, and may represent the predominant form in astrocytes. Heterodimeric channels containing KCNK1 and KCNK3 or KCNK9 have much higher activity. Heterodimeric channels formed by KCNK1 and KCNK9 may contribute to halothane-sensitive currents. Mediates outward rectifying potassium currents in dentate gyrus granule cells and contributes to the regulation of their resting membrane potential. Contributes to the regulation of action potential firing in dentate gyrus granule cells and down-regulates their intrinsic excitability. In astrocytes, the heterodimer formed by KCNK1 and KCNK2 is required for rapid glutamate release in response to activation of G-protein coupled receptors, such as F2R and CNR1. Required for normal ion and water transport in the kidney. Contributes to the regulation of the resting membrane potential of pancreatic beta cells. The low channel activity of homodimeric KCNK1 may be due to sumoylation. The low channel activity may be due to rapid internalization from the cell membrane and retention in recycling endosomes. Permeable to monovalent cations with ion selectivity for K(+) &gt; Rb(+) &gt;&gt; NH4(+) &gt;&gt; Cs(+) = Na(+) = Li(+). This chain is Potassium channel subfamily K member 1, found in Pongo abelii (Sumatran orangutan).